The primary structure comprises 186 residues: Alkyl hydroperoxide reductase AhpD (186 aa).

Cysteine 131 acts as the Proton donor in catalysis. A disulfide bridge connects residues cysteine 131 and cysteine 134. Cysteine 134 functions as the Cysteine sulfenic acid (-SOH) intermediate in the catalytic mechanism.

It belongs to the AhpD family.

It carries out the reaction N(6)-[(R)-dihydrolipoyl]-L-lysyl-[lipoyl-carrier protein] + a hydroperoxide = N(6)-[(R)-lipoyl]-L-lysyl-[lipoyl-carrier protein] + an alcohol + H2O. In terms of biological role, antioxidant protein with alkyl hydroperoxidase activity. Required for the reduction of the AhpC active site cysteine residues and for the regeneration of the AhpC enzyme activity. The polypeptide is Alkyl hydroperoxide reductase AhpD (Rhodospirillum centenum (strain ATCC 51521 / SW)).